The sequence spans 293 residues: Bis(5'-nucleosyl)-tetraphosphatase, symmetrical (293 aa).

It belongs to the Ap4A hydrolase family.

The enzyme catalyses P(1),P(4)-bis(5'-adenosyl) tetraphosphate + H2O = 2 ADP + 2 H(+). Hydrolyzes diadenosine 5',5'''-P1,P4-tetraphosphate to yield ADP. This Pseudomonas fluorescens (strain Pf0-1) protein is Bis(5'-nucleosyl)-tetraphosphatase, symmetrical.